The chain runs to 614 residues: Putative ankyrin repeat protein RBE_0997 (614 aa).

ANK repeat units lie at residues 3–32 (KDEE…DPNI), 36–65 (DDKP…NPNA), 69–98 (DGEP…DPNL), 102–131 (RKNT…NLNA), 135–164 (SGYP…NPNL), 168–197 (DGSP…NVEA), 201–231 (DGNT…DKEK), 239–268 (NGET…TVNI), and 272–301 (AGYT…ELKE). Residues 348–580 (NVEDIDYRKI…VQSAETFMNK (233 aa)) form the Glutamine amidotransferase type-1 domain. The Nucleophile role is filled by Cys444. Catalysis depends on residues His547 and Glu549.

In Rickettsia bellii (strain RML369-C), this protein is Putative ankyrin repeat protein RBE_0997.